A 122-amino-acid polypeptide reads, in one-letter code: Prefoldin subunit 1 (122 aa).

The protein belongs to the prefoldin subunit beta family. Heterohexamer of two PFD-alpha type and four PFD-beta type subunits.

In terms of biological role, binds specifically to cytosolic chaperonin (c-CPN) and transfers target proteins to it. Binds to nascent polypeptide chain and promotes folding in an environment in which there are many competing pathways for nonnative proteins. In Tetraodon nigroviridis (Spotted green pufferfish), this protein is Prefoldin subunit 1 (pfdn1).